The primary structure comprises 395 residues: Flap endonuclease 1 (395 aa).

The interval 1–104 (MGIKQLFQII…GELAKRFQRK (104 aa)) is N-domain. Asp34 lines the Mg(2+) pocket. Residues Arg47 and Arg70 each contribute to the DNA site. The Mg(2+) site is built by Asp86, Glu158, Glu160, Asp179, and Asp181. Positions 122-253 (DIEKFSRRTV…TTALKLIRDH (132 aa)) are I-domain. Glu158 is a binding site for DNA. 2 residues coordinate DNA: Gly231 and Asp233. Residue Asp233 coordinates Mg(2+). The interaction with PCNA stretch occupies residues 341–349 (QQARLEGFF). The tract at residues 344 to 395 (RLEGFFKPVPKTDAQKAAHKRKLEEKNEEKKKKLKQEKKDKAAAKSKPRGAA) is disordered. A compositionally biased stretch (basic and acidic residues) spans 365–386 (KLEEKNEEKKKKLKQEKKDKAA).

It belongs to the XPG/RAD2 endonuclease family. FEN1 subfamily. In terms of assembly, interacts with PCNA. Three molecules of FEN1 bind to one PCNA trimer with each molecule binding to one PCNA monomer. PCNA stimulates the nuclease activity without altering cleavage specificity. Mg(2+) is required as a cofactor. In terms of processing, phosphorylated. Phosphorylation upon DNA damage induces relocalization to the nuclear plasma.

It localises to the nucleus. The protein resides in the nucleolus. It is found in the nucleoplasm. Its subcellular location is the mitochondrion. Structure-specific nuclease with 5'-flap endonuclease and 5'-3' exonuclease activities involved in DNA replication and repair. During DNA replication, cleaves the 5'-overhanging flap structure that is generated by displacement synthesis when DNA polymerase encounters the 5'-end of a downstream Okazaki fragment. It enters the flap from the 5'-end and then tracks to cleave the flap base, leaving a nick for ligation. Also involved in the long patch base excision repair (LP-BER) pathway, by cleaving within the apurinic/apyrimidinic (AP) site-terminated flap. Acts as a genome stabilization factor that prevents flaps from equilibrating into structures that lead to duplications and deletions. Also possesses 5'-3' exonuclease activity on nicked or gapped double-stranded DNA, and exhibits RNase H activity. Also involved in replication and repair of rDNA and in repairing mitochondrial DNA. In Fusarium vanettenii (strain ATCC MYA-4622 / CBS 123669 / FGSC 9596 / NRRL 45880 / 77-13-4) (Fusarium solani subsp. pisi), this protein is Flap endonuclease 1.